The chain runs to 620 residues: UDP-glucose:protein N-beta-glucosyltransferase (620 aa).

The protein belongs to the glycosyltransferase 41 family.

It localises to the cytoplasm. It carries out the reaction L-asparaginyl-[protein] + UDP-alpha-D-glucose = N(4)-(beta-D-glucosyl)-L-asparaginyl-[protein] + UDP + H(+). It functions in the pathway protein modification; protein glycosylation. Its function is as follows. Inverting glycosyltransferase that catalyzes the transfer of one glucose moiety from UDP-glucose to an asparagine residue in peptides and proteins containing the NX(S/T) motif, resulting in their modification with a beta-linked 1,N-glucose. Likely acts as a key component of a general protein glycosylation system. The sequence is that of UDP-glucose:protein N-beta-glucosyltransferase from Actinobacillus pleuropneumoniae serotype 5b (strain L20).